Consider the following 285-residue polypeptide: Methylamine utilization protein MauF (285 aa).

7 helical membrane-spanning segments follow: residues 39–59, 60–80, 119–139, 145–165, 188–208, 212–232, and 265–285; these read FIMM…MHST, MSVE…GGLL, YAIG…LLFA, YAVI…FGFL, VIGL…VQTP, IVTG…VIAV, and VEVD…LVML.

The protein resides in the cell membrane. It participates in one-carbon metabolism; methylamine degradation. This chain is Methylamine utilization protein MauF (mauF), found in Methylophilus methylotrophus (Bacterium W3A1).